Here is a 204-residue protein sequence, read N- to C-terminus: MNEFTLNAEQRSDLGKGASRRLRRLASLVPAVVYGGDKAPESISMLAKEVAKLLENDAAYSHIIELNVGGKKQNVIIKALQRHPAKGHVMHADFVRVIAGQKLTAIVPIHFLNEEAPVKKGGEISHTTTELEVTCLPKDLPEFIEVDLGSLEVGDNVHLSELKAPKGVEFVALAHGTDLAIANVHAPRIVKDEEEGEAEEGAAE.

The protein belongs to the bacterial ribosomal protein bL25 family. CTC subfamily. As to quaternary structure, part of the 50S ribosomal subunit; part of the 5S rRNA/L5/L18/L25 subcomplex. Contacts the 5S rRNA. Binds to the 5S rRNA independently of L5 and L18.

Functionally, this is one of the proteins that binds to the 5S RNA in the ribosome where it forms part of the central protuberance. The polypeptide is Large ribosomal subunit protein bL25 (Pseudomonas syringae pv. syringae (strain B728a)).